Reading from the N-terminus, the 275-residue chain is NADPH-dependent 7-cyano-7-deazaguanine reductase (275 aa).

81-83 provides a ligand contact to substrate; it reads IES. Position 83 to 84 (83 to 84) interacts with NADPH; it reads SK. The active-site Thioimide intermediate is the C181. Residue D188 is the Proton donor of the active site. Position 220-221 (220-221) interacts with substrate; the sequence is HE. NADPH is bound at residue 249-250; the sequence is RG.

The protein belongs to the GTP cyclohydrolase I family. QueF type 2 subfamily. In terms of assembly, homodimer.

Its subcellular location is the cytoplasm. It catalyses the reaction 7-aminomethyl-7-carbaguanine + 2 NADP(+) = 7-cyano-7-deazaguanine + 2 NADPH + 3 H(+). It participates in tRNA modification; tRNA-queuosine biosynthesis. In terms of biological role, catalyzes the NADPH-dependent reduction of 7-cyano-7-deazaguanine (preQ0) to 7-aminomethyl-7-deazaguanine (preQ1). This is NADPH-dependent 7-cyano-7-deazaguanine reductase from Xylella fastidiosa (strain M23).